We begin with the raw amino-acid sequence, 1098 residues long: Ubiquitin carboxyl-terminal hydrolase 36 (1098 aa).

Basic and acidic residues predominate over residues 72 to 86 (RHRSGDELQARKPGT). The disordered stretch occupies residues 72–97 (RHRSGDELQARKPGTERVSGSGGDGV). The 302-residue stretch at 122-423 (AGLHNLGNTC…QAYVLFYLRI (302 aa)) folds into the USP domain. Catalysis depends on Cys-131, which acts as the Nucleophile. His-382 functions as the Proton acceptor in the catalytic mechanism. Disordered regions lie at residues 428–464 (KSPE…VPSP) and 483–574 (EVGV…RDTI). A phosphoserine mark is found at Ser-429, Ser-463, Ser-547, and Ser-578. The segment covering 540–558 (PLQSLTTSPTTSQGSPGTG) has biased composition (low complexity). The tract at residues 589 to 640 (GHRLKGEGSGVDLEKGDSSSSSPEHSASSDPAKAPQTAESRAAHACDSQGTN) is disordered. Residues 606-617 (SSSSSPEHSASS) show a composition bias toward low complexity. At Ser-663 the chain carries Phosphoserine. Disordered stretches follow at residues 664–710 (PALS…SPSA) and 722–973 (HPVV…ALSV). The span at 665–677 (ALSSTTTEPTSLM) shows a compositional bias: polar residues. Ser-678 bears the Phosphoserine mark. The span at 683–692 (KKLALSAKKA) shows a compositional bias: low complexity. At Ser-709 the chain carries Phosphoserine. The span at 746–763 (HPHSASLSSSSAKPLGTS) shows a compositional bias: low complexity. Residues 853–878 (GQFQDQSWSSGSQKEEGTQPQVNGHQ) show a composition bias toward polar residues. Residues 889–898 (SSRKRRKRKR) are compositionally biased toward basic residues. Polar residues predominate over residues 901–917 (GLSQEATPSQDLIQHSC). The segment covering 921–932 (DHSEPEARTELQ) has biased composition (basic and acidic residues). Residues 933 to 943 (KKKKKKRRKRK) are compositionally biased toward basic residues. The segment covering 944–960 (PEPQQDEESKHPGDQRS) has biased composition (basic and acidic residues).

This sequence belongs to the peptidase C19 family. As to quaternary structure, interacts with isoform 3 of FBXW7; the interaction inhibits MYC degradation induced by SCF(FBW7) complex. Interacts with NTRK1; USP36 does not deubiquitinate NTRK1. Interacts with NEDD4L (via domains WW1, 3 and 4); the interaction inhibits ubiquitination of, at least, NTRK1, KCNQ2 and KCNQ3 by NEDD4L. Interacts (via C-terminus) with EXOSC10 (via C-terminus); the interaction is facilitated by the association with RNA and promotes sumoylation of EXOSC10. In terms of processing, polyubiquitinated by NEDD4L, no effect on USP36 protein levels. Both proteins interact with and regulate each other's ubiquitination levels.

It is found in the nucleus. It localises to the nucleolus. The protein localises to the cytoplasm. It carries out the reaction Thiol-dependent hydrolysis of ester, thioester, amide, peptide and isopeptide bonds formed by the C-terminal Gly of ubiquitin (a 76-residue protein attached to proteins as an intracellular targeting signal).. Its function is as follows. Deubiquitinase essential for the regulation of nucleolar structure and function. Required for cell and organism viability. Plays an important role in ribosomal RNA processing and protein synthesis, which is mediated, at least in part, through deubiquitination of DHX33, NPM1 and FBL, regulating their protein stability. Functions as a transcriptional repressor by deubiquiting histone H2B at the promoters of genes critical for cellular differentiation, such as CDKN1A, thereby preventing histone H3 'Lys-4' trimethylation (H3K4). Specifically deubiquitinates MYC in the nucleolus, leading to prevent MYC degradation by the proteasome: acts by specifically interacting with isoform 3 of FBXW7 (FBW7gamma) in the nucleolus and counteracting ubiquitination of MYC by the SCF(FBW7) complex. In contrast, it does not interact with isoform 1 of FBXW7 (FBW7alpha) in the nucleoplasm. Interacts to and regulates the actions of E3 ubiquitin-protein ligase NEDD4L over substrates such as NTRK1, KCNQ2 and KCNQ3, affecting their expression an functions. Deubiquitinates SOD2, regulates SOD2 protein stability. Deubiquitinase activity is required to control selective autophagy activation by ubiquitinated proteins. Promotes CEP63 stabilization through 'Lys-48'-linked deubiquitination leading to increased stability. Acts as a SUMO ligase to promote EXOSC10 sumoylation critical for the nucleolar RNA exosome function in rRNA processing. Binds to pre-rRNAs. This Mus musculus (Mouse) protein is Ubiquitin carboxyl-terminal hydrolase 36 (Usp36).